Here is a 264-residue protein sequence, read N- to C-terminus: Thymidylate synthase (264 aa).

Position 21 (R21) interacts with dUMP. (6R)-5,10-methylene-5,6,7,8-tetrahydrofolate is bound at residue H51. 126–127 (RR) is a binding site for dUMP. The Nucleophile role is filled by C146. DUMP-binding positions include 166-169 (RSCD), N177, and 207-209 (HLY). D169 provides a ligand contact to (6R)-5,10-methylene-5,6,7,8-tetrahydrofolate. A263 serves as a coordination point for (6R)-5,10-methylene-5,6,7,8-tetrahydrofolate.

It belongs to the thymidylate synthase family. Bacterial-type ThyA subfamily. Homodimer.

It is found in the cytoplasm. It catalyses the reaction dUMP + (6R)-5,10-methylene-5,6,7,8-tetrahydrofolate = 7,8-dihydrofolate + dTMP. Its pathway is pyrimidine metabolism; dTTP biosynthesis. Its function is as follows. Catalyzes the reductive methylation of 2'-deoxyuridine-5'-monophosphate (dUMP) to 2'-deoxythymidine-5'-monophosphate (dTMP) while utilizing 5,10-methylenetetrahydrofolate (mTHF) as the methyl donor and reductant in the reaction, yielding dihydrofolate (DHF) as a by-product. This enzymatic reaction provides an intracellular de novo source of dTMP, an essential precursor for DNA biosynthesis. In Yersinia pestis bv. Antiqua (strain Antiqua), this protein is Thymidylate synthase.